Here is a 228-residue protein sequence, read N- to C-terminus: L-ribulose-5-phosphate 4-epimerase UlaF (228 aa).

Residues 26-27 (GN), 43-44 (SG), and 72-73 (SS) contribute to the substrate site. Residues Asp-74, His-93, and His-95 each contribute to the Zn(2+) site. Asp-118 (proton donor/acceptor) is an active-site residue. Residue His-167 coordinates Zn(2+). The active-site Proton donor/acceptor is Tyr-225.

The protein belongs to the aldolase class II family. AraD/FucA subfamily. It depends on Zn(2+) as a cofactor.

It catalyses the reaction L-ribulose 5-phosphate = D-xylulose 5-phosphate. It participates in cofactor degradation; L-ascorbate degradation; D-xylulose 5-phosphate from L-ascorbate: step 4/4. Its function is as follows. Catalyzes the isomerization of L-ribulose 5-phosphate to D-xylulose 5-phosphate. Is involved in the anaerobic L-ascorbate utilization. This chain is L-ribulose-5-phosphate 4-epimerase UlaF, found in Shigella boydii serotype 18 (strain CDC 3083-94 / BS512).